The following is a 423-amino-acid chain: MERMLPLLALGLLAAGFCPAVLCHPNSPLDEENLTQENQDRGTHVDLGLASANVDFAFSLYKQLVLKAPDKNVIFSPLSISTALAFLSLGAHNTTLTEILKGLKFNLTETSEAEIHQSFQHLLRTLNQSSDELQLSMGNAMFVKEQLSLLDRFTEDAKRLYGSEAFATDFQDSAAAKKLINDYVKNGTRGKITDLIKDLDSQTMMVLVNYIFFKAKWEMPFDPQDTHQSRFYLSKKKWVMVPMMSLHHLTIPYFRDEELSCTVVELKYTGNASALFILPDQDKMEEVEAMLLPETLKRWRDSLEFREIGELYLPKFSISRDYNLNDILLQLGIEEAFTSKADLSGITGARNLAVSQVVHKAVLDVFEEGTEASAATAVKITLLSALVETRTIVRFNRPFLMIIVPTDTQNIFFMSKVTNPKQA.

A signal peptide spans 1–23 (MERMLPLLALGLLAAGFCPAVLC). Residues Asn33, Asn93, Asn106, Asn127, and Asn186 are each glycosylated (N-linked (GlcNAc...) asparagine). A DNA-binding region spans residues 235–237 (KKK). An N-linked (GlcNAc...) asparagine glycan is attached at Asn271. Positions 369–394 (GTEASAATAVKITLLSALVETRTIVR) are RCL. Positions 381–389 (TLLSALVET) are O-glycosylated at one site.

Belongs to the serpin family. Interacts with DNAJC1. In terms of processing, N- and O-glycosylated. As to expression, plasma. Synthesized in the liver. Like the related alpha-1-antitrypsin, its concentration increases in the acute phase of inflammation or infection. Found in the amyloid plaques from the hippocampus of Alzheimer disease brains.

It is found in the secreted. Its function is as follows. Although its physiological function is unclear, it can inhibit neutrophil cathepsin G and mast cell chymase, both of which can convert angiotensin-1 to the active angiotensin-2. This Homo sapiens (Human) protein is Alpha-1-antichymotrypsin (SERPINA3).